A 156-amino-acid chain; its full sequence is ATP synthase subunit b (156 aa).

Residues alanine 13–isoleucine 33 form a helical membrane-spanning segment.

It belongs to the ATPase B chain family. F-type ATPases have 2 components, F(1) - the catalytic core - and F(0) - the membrane proton channel. F(1) has five subunits: alpha(3), beta(3), gamma(1), delta(1), epsilon(1). F(0) has three main subunits: a(1), b(2) and c(10-14). The alpha and beta chains form an alternating ring which encloses part of the gamma chain. F(1) is attached to F(0) by a central stalk formed by the gamma and epsilon chains, while a peripheral stalk is formed by the delta and b chains.

It is found in the cell inner membrane. Its function is as follows. F(1)F(0) ATP synthase produces ATP from ADP in the presence of a proton or sodium gradient. F-type ATPases consist of two structural domains, F(1) containing the extramembraneous catalytic core and F(0) containing the membrane proton channel, linked together by a central stalk and a peripheral stalk. During catalysis, ATP synthesis in the catalytic domain of F(1) is coupled via a rotary mechanism of the central stalk subunits to proton translocation. In terms of biological role, component of the F(0) channel, it forms part of the peripheral stalk, linking F(1) to F(0). The protein is ATP synthase subunit b of Shewanella sediminis (strain HAW-EB3).